Consider the following 96-residue polypeptide: Maintenance of carboxysome distribution protein B (96 aa).

Residues 1–18 (MTNLEDKLSASIKTENKD) show a composition bias toward basic and acidic residues. The tract at residues 1 to 96 (MTNLEDKLSA…STHPRRVWPD (96 aa)) is disordered. Over residues 59–74 (ARATTTKPAVSKSSKP) the composition is skewed to low complexity.

As to quaternary structure, monomer, associates with McdA:DNA. Interacts with shell components of the carboxysome.

The protein localises to the carboxysome. McdA and McdB together mediate carboxysome positioning on the nucleoid and to prevent their aggregation in the cell. Undergoes liquid-liquid phase separation at pH 7.0 in the presence of crowders polyethylene glycol or Ficoll. McdA is an ATPase that forms dynamic gradients on the nucleoid in response to adapter protein McdB, which associates with carboxysomes. The interplay between McdA gradients on the nucleoid and McdB-bound carboxysomes result in the equal spacing of Cbs along the cell length. Stimulates the ATPase activity of McdA, causing McdA to be released from DNA. Functionally, incorrect positioning (aggregation) of carboxysomes results in reduced CO(2) fixation by encapsulated form 1 ribulose-1,5-bisphosphate carboxylase (RuBisCO, cbbL/cbbS), which leads to slower growth. The sequence is that of Maintenance of carboxysome distribution protein B from Halothiobacillus neapolitanus (strain ATCC 23641 / c2) (Thiobacillus neapolitanus).